Reading from the N-terminus, the 208-residue chain is Thymidylate kinase (208 aa).

7-14 (GIDGAGKT) contributes to the ATP binding site.

This sequence belongs to the thymidylate kinase family.

The enzyme catalyses dTMP + ATP = dTDP + ADP. Its function is as follows. Phosphorylation of dTMP to form dTDP in both de novo and salvage pathways of dTTP synthesis. The chain is Thymidylate kinase (tmk) from Xylella fastidiosa (strain 9a5c).